A 420-amino-acid chain; its full sequence is WD repeat-containing protein jip5 (420 aa).

WD repeat units lie at residues 9–48, 72–111, 117–158, 221–262, 271–314, and 318–355; these read PLSA…VDSD, RHKG…VENK, DKNG…SKVS, VSSV…DQDE, GGGE…VVSE, and DETE…GDGV. The tract at residues 39 to 63 is disordered; the sequence is RLPSDEVDSDDDGASTSSSRTGRGH. The disordered stretch occupies residues 350–420; it reads DSGDGVNGNE…QAVMAFHDLD (71 aa). A compositionally biased stretch (acidic residues) spans 368–387; sequence DDSDEDSDDGDDDDDSGDSD. Residues 394–406 show a composition bias toward basic residues; sequence DARKKRKKGKTPK.

This sequence belongs to the WD repeat WDR55 family.

The protein resides in the nucleus. Its subcellular location is the nucleolus. In Aspergillus terreus (strain NIH 2624 / FGSC A1156), this protein is WD repeat-containing protein jip5 (jip5).